The primary structure comprises 357 residues: Phosphoribosylformylglycinamidine cyclo-ligase (357 aa).

Belongs to the AIR synthase family.

The protein localises to the cytoplasm. The catalysed reaction is 2-formamido-N(1)-(5-O-phospho-beta-D-ribosyl)acetamidine + ATP = 5-amino-1-(5-phospho-beta-D-ribosyl)imidazole + ADP + phosphate + H(+). It participates in purine metabolism; IMP biosynthesis via de novo pathway; 5-amino-1-(5-phospho-D-ribosyl)imidazole from N(2)-formyl-N(1)-(5-phospho-D-ribosyl)glycinamide: step 2/2. The chain is Phosphoribosylformylglycinamidine cyclo-ligase from Allorhizobium ampelinum (strain ATCC BAA-846 / DSM 112012 / S4) (Agrobacterium vitis (strain S4)).